The chain runs to 243 residues: Probable septum site-determining protein MinC (243 aa).

The protein belongs to the MinC family. As to quaternary structure, interacts with MinD and FtsZ.

Functionally, cell division inhibitor that blocks the formation of polar Z ring septums. Rapidly oscillates between the poles of the cell to destabilize FtsZ filaments that have formed before they mature into polar Z rings. Prevents FtsZ polymerization. This Agathobacter rectalis (strain ATCC 33656 / DSM 3377 / JCM 17463 / KCTC 5835 / VPI 0990) (Eubacterium rectale) protein is Probable septum site-determining protein MinC.